Reading from the N-terminus, the 156-residue chain is ATP synthase subunit b (156 aa).

The chain crosses the membrane as a helical span at residues 5-25; sequence LTLIGQAIAFAFFVAFCMKFV.

It belongs to the ATPase B chain family. F-type ATPases have 2 components, F(1) - the catalytic core - and F(0) - the membrane proton channel. F(1) has five subunits: alpha(3), beta(3), gamma(1), delta(1), epsilon(1). F(0) has three main subunits: a(1), b(2) and c(10-14). The alpha and beta chains form an alternating ring which encloses part of the gamma chain. F(1) is attached to F(0) by a central stalk formed by the gamma and epsilon chains, while a peripheral stalk is formed by the delta and b chains.

Its subcellular location is the cell inner membrane. Functionally, f(1)F(0) ATP synthase produces ATP from ADP in the presence of a proton or sodium gradient. F-type ATPases consist of two structural domains, F(1) containing the extramembraneous catalytic core and F(0) containing the membrane proton channel, linked together by a central stalk and a peripheral stalk. During catalysis, ATP synthesis in the catalytic domain of F(1) is coupled via a rotary mechanism of the central stalk subunits to proton translocation. Its function is as follows. Component of the F(0) channel, it forms part of the peripheral stalk, linking F(1) to F(0). This is ATP synthase subunit b from Acinetobacter baumannii (strain AYE).